We begin with the raw amino-acid sequence, 378 residues long: MESSPPPPPPTITVQVKFGGRTIPVEVPAAATAADLKRLLQPLTNVLPRGQRLICKGKVLADAASLSSMQVVNGSKVMLMASQGLHQGDGPITKNSSVPAPSTRRASNVKEAQIQKSDTNVSKIRPERWKATGIIALSDSSLKAVPEEVWGCGSSIRVLDVSNNCIEAIPQEIAALRSLQKLILTANDIADGNISWEGLTCVQTLTVLSLSQNRLVTLPSSLGSITHLRELRIANNRLENLPVEIGLLKHLEILIANNNRITSLPSSIGGCESLNEVDLSSNLLAELPEAFGNLQHLKALSVRNNGLTSLPSAFFIKCSQLITLDLHGTEITNDVLRQVDGWEEFDERRRKKHQKQLDFRVGSSVVFDEGADDDYRRL.

Residues 10–86 enclose the Ubiquitin-like domain; the sequence is PTITVQVKFG…VMLMASQGLH (77 aa). A disordered region spans residues 85-120; it reads LHQGDGPITKNSSVPAPSTRRASNVKEAQIQKSDTN. Polar residues predominate over residues 93–106; it reads TKNSSVPAPSTRRA. LRR repeat units follow at residues 129–152, 153–176, 178–201, 202–225, 226–250, 252–271, 272–293, 294–317, and 319–344; these read WKAT…VWGC, GSSI…IAAL, SLQK…GLTC, VQTL…LGSI, THLR…LLKH, EILI…IGGC, ESLN…AFGN, LQHL…FFIK, and SQLI…GWEE.

This sequence belongs to the SHOC2 family. Widely expressed except in panicles.

Its function is as follows. Leucine-rich repeat protein that likely mediates protein interactions, possibly in the context of signal transduction. The chain is Plant intracellular Ras-group-related LRR protein 8 (IRL8) from Oryza sativa subsp. japonica (Rice).